A 312-amino-acid polypeptide reads, in one-letter code: HTH-type transcriptional regulator PtxR (312 aa).

Positions 11-68 (LNLNHLYAFVAVAEHNSFTAAAEALGLSKSLLSEQLRRLEADLGIQLLTRTTRRMTLT) constitute an HTH lysR-type domain. The H-T-H motif DNA-binding region spans 28 to 47 (FTAAAEALGLSKSLLSEQLR).

This sequence belongs to the LysR transcriptional regulatory family. Monomer in solution. May dimerize on binding to DNA. Interacts with PtxS in the absence of 2-ketogluconate. Binding of the 2-ketogluconate effector to PtxS causes PtxS/PtxR complex dissociation.

Its activity is regulated as follows. Negatively regulated by PtxS, which interacts with PtxR and prevents its activity. Its function is as follows. Plays an important role in the regulation of the production of the virulence factor exotoxin A (toxA), via positive regulation of the transcription of the toxA gene. Acts by binding directly to the toxA promoter region. Besides toxA, PtxR modulates the expression of genes that code for the QS-controlled virulence factors. It negatively regulates the expression of the rhamnolipid and pyocyanine genes, through the autoinducer synthase RhlI, and the PQS synthesis operon pqsABCDE, while it positively regulates the expression of lasB through the autoinducer synthase LasI. Also positively regulates the expression of the exotoxin A regulatory protein (toxR or regA). In terms of biological role, in addition, is involved in the positive regulation of glucose metabolism via the regulation of the expression of the kgu and gad operons. Acts by binding directly to the promoter region of the kgu and gad operons. The sequence is that of HTH-type transcriptional regulator PtxR from Pseudomonas aeruginosa (strain ATCC 15692 / DSM 22644 / CIP 104116 / JCM 14847 / LMG 12228 / 1C / PRS 101 / PAO1).